Reading from the N-terminus, the 179-residue chain is CASP-like protein 5A2 (179 aa).

The Cytoplasmic segment spans residues 1 to 54; it reads MEATSHPAVHPVAVPPQFQGAGPPAIQMKDFPGSPGTAGGLALRFTQFGFSLIS. A run of 2 helical transmembrane segments spans residues 55-75 and 76-96; these read LCIMVSIAGFSSVTAFCFLVA and TMVFQCIWSLCLGALDIYALL. The Cytoplasmic portion of the chain corresponds to 97–114; that stretch reads TQRSFRNPLIVSLFVVGD. A helical membrane pass occupies residues 115 to 135; it reads WVTSTMTFAGACAAAGITVLI. Topologically, residues 136–154 are extracellular; it reads DNDLEQCGPNHCGRFEAAA. The chain crosses the membrane as a helical span at residues 155–175; that stretch reads AMAFMSWTATTLSFCLSFWLL. Residues 176 to 179 are Cytoplasmic-facing; sequence ASCR.

It belongs to the Casparian strip membrane proteins (CASP) family. Homodimer and heterodimers.

It localises to the cell membrane. The polypeptide is CASP-like protein 5A2 (Physcomitrium patens (Spreading-leaved earth moss)).